The sequence spans 606 residues: Electron transfer flavoprotein-ubiquinone oxidoreductase, mitochondrial (606 aa).

Position 59–73 (Val-59–Ile-73) interacts with FAD. Residues Pro-448–Phe-468 form a helical membrane-spanning segment. Residues Cys-551, Cys-575, Cys-578, and Cys-581 each coordinate [4Fe-4S] cluster.

It belongs to the ETF-QO/FixC family. As to quaternary structure, monomer. Requires [4Fe-4S] cluster as cofactor. FAD serves as cofactor.

The protein resides in the mitochondrion inner membrane. The enzyme catalyses a ubiquinone + reduced [electron-transfer flavoprotein] = a ubiquinol + oxidized [electron-transfer flavoprotein] + H(+). In terms of biological role, accepts electrons from ETF and reduces ubiquinone. The sequence is that of Electron transfer flavoprotein-ubiquinone oxidoreductase, mitochondrial (etfdh) from Dictyostelium discoideum (Social amoeba).